A 235-amino-acid polypeptide reads, in one-letter code: Ribosomal RNA small subunit methyltransferase G (235 aa).

Residues Gly-75, Phe-80, Ala-126–Glu-127, and Arg-145 each bind S-adenosyl-L-methionine.

This sequence belongs to the methyltransferase superfamily. RNA methyltransferase RsmG family.

It localises to the cytoplasm. In terms of biological role, specifically methylates the N7 position of a guanine in 16S rRNA. This Carboxydothermus hydrogenoformans (strain ATCC BAA-161 / DSM 6008 / Z-2901) protein is Ribosomal RNA small subunit methyltransferase G.